A 100-amino-acid polypeptide reads, in one-letter code: uncharacterized protein (100 aa).

A helical membrane pass occupies residues 62 to 82 (IPIVIIVSIFILLIIGSISLY).

It localises to the membrane. This is an uncharacterized protein from Dictyostelium discoideum (Social amoeba).